Reading from the N-terminus, the 206-residue chain is uncharacterized protein (206 aa).

The protein resides in the plastid. Its subcellular location is the cyanelle. This is an uncharacterized protein from Cyanophora paradoxa.